Consider the following 430-residue polypeptide: Septin-14 (430 aa).

Residues 48-313 (KGFSFNILCV…ECYRSNRLQK (266 aa)) form the Septin-type G domain. The segment at 58-65 (GETGIGKT) is G1 motif. Residues 58–65 (GETGIGKT), glycine 113, 194–202 (KADSLSKND), glycine 246, and arginine 261 contribute to the GTP site. Positions 110–113 (KTVG) are G3 motif. The interval 193–196 (AKAD) is G4 motif. Residues 329–410 (QEMYEAKRRE…IIDFYKMKAA (82 aa)) are a coiled coil. Residues 367 to 430 (DAEKELQDKF…NIKKDKDRKK (64 aa)) form a required for interaction with SEPTIN4. Required for migration of cortical neurons during corticogenesis region.

It belongs to the TRAFAC class TrmE-Era-EngA-EngB-Septin-like GTPase superfamily. Septin GTPase family. In terms of assembly, septins polymerize into heterooligomeric protein complexes that form filaments, and can associate with cellular membranes, actin filaments and microtubules. GTPase activity is required for filament formation. Interacts with ACTN4. Interacts with SEPTIN9. Interacts (via C-terminus) with SEPTIN4. In terms of tissue distribution, expressed in the testis and brain including the cerebrum, hippocampus and cerebellum (at protein level).

It localises to the cytoplasm. Its subcellular location is the cytoskeleton. The protein localises to the cell projection. The protein resides in the axon. It is found in the dendrite. It localises to the perikaryon. Its subcellular location is the perinuclear region. The protein localises to the cytoplasmic vesicle. The protein resides in the secretory vesicle. It is found in the acrosome. Its function is as follows. Filament-forming cytoskeletal GTPase. Involved in the migration of cortical neurons and the formation of neuron leading processes during embryonic development. Plays a role in sperm head formation during spermiogenesis, potentially via facilitating localization of ACTN4 to cell filaments. This is Septin-14 from Mus musculus (Mouse).